Here is a 308-residue protein sequence, read N- to C-terminus: Pantoate--beta-alanine ligase (308 aa).

Residue Ala-2 is a propeptide, removed; partial.

The protein belongs to the pantothenate synthetase family. As to quaternary structure, homodimer. In terms of tissue distribution, expressed at low levels in leaf and root.

It is found in the cytoplasm. It carries out the reaction (R)-pantoate + beta-alanine + ATP = (R)-pantothenate + AMP + diphosphate + H(+). The protein operates within cofactor biosynthesis; (R)-pantothenate biosynthesis; (R)-pantothenate from (R)-pantoate and beta-alanine: step 1/1. This Lotus japonicus (Lotus corniculatus var. japonicus) protein is Pantoate--beta-alanine ligase (PANC).